A 154-amino-acid polypeptide reads, in one-letter code: Putative thioredoxin H10 (154 aa).

Residues 24–148 enclose the Thioredoxin domain; sequence NNNNSYGQTR…LQKKTAAAAD (125 aa). Residues Cys-74 and Cys-77 each act as nucleophile in the active site. Cys-74 and Cys-77 are joined by a disulfide.

The protein belongs to the thioredoxin family.

The protein resides in the cytoplasm. Its function is as follows. Probable thiol-disulfide oxidoreductase that may be involved in the redox regulation of a number of cytosolic enzymes. The protein is Putative thioredoxin H10 of Arabidopsis thaliana (Mouse-ear cress).